Reading from the N-terminus, the 279-residue chain is Very long chain fatty acid elongase 1 (279 aa).

Residue methionine 1 is modified to N-acetylmethionine. The next 7 membrane-spanning stretches (helical) occupy residues 23 to 43, 61 to 81, 110 to 130, 137 to 154, 176 to 196, 203 to 223, and 231 to 251; these read PLMG…YFIL, FMIV…YEFL, VAWL…IFIL, VTFL…SWWW, VVMY…PYLW, AIQL…YFMP, and IIIH…SNFW. Positions 275 to 279 match the Di-lysine motif motif; sequence KVKAN.

It belongs to the ELO family. ELOVL1 subfamily. In terms of assembly, interacts with LASS2, TECR and HSD17B12. Interacts with TECR. In terms of tissue distribution, expressed in a broad variety of tissues. Highly expressed in stomach, lung, kidney, skin and intestine. Moderately expressed in white adipose tissue, liver, spleen, brain, brown adipose tissue, heart and muscle. Weakly expressed in testis.

It localises to the endoplasmic reticulum membrane. The catalysed reaction is a very-long-chain acyl-CoA + malonyl-CoA + H(+) = a very-long-chain 3-oxoacyl-CoA + CO2 + CoA. The enzyme catalyses eicosanoyl-CoA + malonyl-CoA + H(+) = 3-oxodocosanoyl-CoA + CO2 + CoA. It carries out the reaction docosanoyl-CoA + malonyl-CoA + H(+) = 3-oxotetracosanoyl-CoA + CO2 + CoA. It catalyses the reaction tetracosanoyl-CoA + malonyl-CoA + H(+) = 3-oxohexacosanoyl-CoA + CO2 + CoA. The catalysed reaction is (11Z)-eicosenoyl-CoA + malonyl-CoA + H(+) = 3-oxo-(13Z)-docosenoyl-CoA + CO2 + CoA. The enzyme catalyses (13Z)-docosenoyl-CoA + malonyl-CoA + H(+) = 3-oxo-(15Z)-tetracosenoyl-CoA + CO2 + CoA. It participates in lipid metabolism; fatty acid biosynthesis. In terms of biological role, catalyzes the first and rate-limiting reaction of the four reactions that constitute the long-chain fatty acids elongation cycle. This endoplasmic reticulum-bound enzymatic process allows the addition of 2 carbons to the chain of long- and very long-chain fatty acids (VLCFAs) per cycle. Condensing enzyme that exhibits activity toward saturated and monounsaturated acyl-CoA substrates, with the highest activity towards C22:0 acyl-CoA. May participate in the production of both saturated and monounsaturated VLCFAs of different chain lengths that are involved in multiple biological processes as precursors of membrane lipids and lipid mediators. Important for saturated C24:0 and monounsaturated C24:1 sphingolipid synthesis. Indirectly inhibits RPE65 via production of VLCFAs. The chain is Very long chain fatty acid elongase 1 from Mus musculus (Mouse).